The following is a 326-amino-acid chain: Vitamin B12 import system permease protein BtuC (326 aa).

9 consecutive transmembrane segments (helical) span residues 15-35 (WLLS…CAGE), 61-81 (LAVL…QALF), 88-108 (PGLL…VLLG), 112-132 (LPGW…TLIL), 146-166 (LLAG…AIYF), 184-204 (GGVD…LIWI), 240-260 (GWMV…GLVI), 274-294 (VLLP…DVVA), and 302-322 (ELPI…WLLL).

The protein belongs to the binding-protein-dependent transport system permease family. FecCD subfamily. The complex is composed of two ATP-binding proteins (BtuD), two transmembrane proteins (BtuC) and a solute-binding protein (BtuF).

It is found in the cell inner membrane. Its function is as follows. Part of the ABC transporter complex BtuCDF involved in vitamin B12 import. Involved in the translocation of the substrate across the membrane. This Salmonella choleraesuis (strain SC-B67) protein is Vitamin B12 import system permease protein BtuC.